Here is a 470-residue protein sequence, read N- to C-terminus: Maltose fermentation regulatory protein YPR196W (470 aa).

Positions 8 to 34 (CDCCRVRRVKCDRNRPCDRCRQRNLRC) form a DNA-binding region, zn(2)-C6 fungal-type. The short motif at 41–49 (RKRGPKSIG) is the Nuclear localization signal element.

It belongs to the MAL13 family.

It is found in the nucleus. In terms of biological role, may regulate the transcription of maltase and maltose permease genes. This is Maltose fermentation regulatory protein YPR196W from Saccharomyces cerevisiae (strain ATCC 204508 / S288c) (Baker's yeast).